Reading from the N-terminus, the 523-residue chain is Transcription factor MYB120 (523 aa).

HTH myb-type domains lie at 23–75 (GVIL…ANHL) and 76–130 (RPNL…KRLL). 2 DNA-binding regions (H-T-H motif) span residues 51 to 75 (WNAV…ANHL) and 103 to 126 (WARM…NTRL). 4 disordered regions span residues 140-254 (DIIP…YPTL), 332-373 (QTAT…SHYT), 396-426 (QIPQ…GAHR), and 444-470 (LASG…NNTN). Basic residues predominate over residues 147-167 (LHPHPHHQQQQQHNHHHHHHQ). Polar residues predominate over residues 175–185 (MYFQPQSSQRN). Low complexity-rich tracts occupy residues 202-212 (SSSSFTFHTTT), 223-232 (TPNTPSQLSS), and 341-368 (NPYS…PSFL). A compositionally biased stretch (polar residues) spans 396–410 (QIPQIDGFNNVNNFT).

In terms of tissue distribution, expressed in pollen grains and pollen tube. Mostly expressed in mature pollen grains, and, to a lower extent, in inflorescences and siliques.

The protein resides in the nucleus. In terms of biological role, transcription activator. Binds to 5'-CAACTGTC-3' and/or 5'-TAACAAA-3' motif in target gene promoter to promote their expression. Together with MYB97 and MYB101, functions as a male factor that controls pollen tube-synergid interaction in fertilization. Required for pollen tube growth arrest and sperm cell release in the female gametophyte, probably via the regulation of pollen tube-specific gene expression. In Arabidopsis thaliana (Mouse-ear cress), this protein is Transcription factor MYB120.